A 329-amino-acid polypeptide reads, in one-letter code: DNA-directed RNA polymerase subunit alpha (329 aa).

The interval 1–231 (MQTTLLKPKT…EQLAVFAQLE (231 aa)) is alpha N-terminal domain (alpha-NTD). An alpha C-terminal domain (alpha-CTD) region spans residues 249–329 (FDPILLRPVD…SWPPAGLDKR (81 aa)).

Belongs to the RNA polymerase alpha chain family. As to quaternary structure, homodimer. The RNAP catalytic core consists of 2 alpha, 1 beta, 1 beta' and 1 omega subunit. When a sigma factor is associated with the core the holoenzyme is formed, which can initiate transcription.

The enzyme catalyses RNA(n) + a ribonucleoside 5'-triphosphate = RNA(n+1) + diphosphate. DNA-dependent RNA polymerase catalyzes the transcription of DNA into RNA using the four ribonucleoside triphosphates as substrates. In Variovorax paradoxus (strain S110), this protein is DNA-directed RNA polymerase subunit alpha.